We begin with the raw amino-acid sequence, 346 residues long: Protein phosphatase 1 regulatory subunit 7 (346 aa).

Residues 1 to 13 (MADEEGETEVQEM) are compositionally biased toward acidic residues. Residues 1 to 46 (MADEEGETEVQEMEVDRRESDESADDEAKEKPDRVDGGVKNGEVPL) form a disordered region. The segment covering 14-37 (EVDRRESDESADDEAKEKPDRVDG) has biased composition (basic and acidic residues). LRR repeat units lie at residues 63–84 (EAED…EVLK), 85–106 (KVKT…EQLV), 107–128 (TLTE…ETLR), 129–150 (DLQI…ESLS), 151–172 (HLQR…GTLT), 173–194 (QLRL…DSLR), 195–216 (ELDS…ETLT), 217–238 (NLTV…QNLV), 239–260 (NLRE…ENNN), 261–282 (KLTT…KHLS), and 283–304 (ELQE…EELS). The region spanning 317–346 (NPLQKDAQYRRKIMLALPSVRQIDATFVRF) is the LRRCT domain.

The protein belongs to the SDS22 family.

Its subcellular location is the nucleus. In terms of biological role, regulatory subunit of protein phosphatase 1. The sequence is that of Protein phosphatase 1 regulatory subunit 7 (ppp1r7) from Xenopus tropicalis (Western clawed frog).